The primary structure comprises 269 residues: Interleukin-1 beta (269 aa).

Positions 1–116 (MAEVPELASE…TRNNDACVHD (116 aa)) are excised as a propeptide.

Belongs to the IL-1 family. Monomer. In its precursor form, weakly interacts with full-length MEFV; the mature cytokine does not interact at all. Interacts with integrins ITGAV:ITGBV and ITGA5:ITGB1; integrin-binding is required for IL1B signaling. Interacts with cargo receptor TMED10; the interaction is direct and is required for the secretion of IL1B mature form. Interacts with HSP90AB1; the interaction facilitates cargo translocation into the ERGIC. Interacts with HSP90B1; the interaction facilitates cargo translocation into the ERGIC.

The protein resides in the cytoplasm. Its subcellular location is the cytosol. It localises to the secreted. It is found in the lysosome. The protein localises to the extracellular exosome. In terms of biological role, potent pro-inflammatory cytokine. Initially discovered as the major endogenous pyrogen, induces prostaglandin synthesis, neutrophil influx and activation, T-cell activation and cytokine production, B-cell activation and antibody production, and fibroblast proliferation and collagen production. Promotes Th17 differentiation of T-cells. Synergizes with IL12/interleukin-12 to induce IFNG synthesis from T-helper 1 (Th1) cells. Plays a role in angiogenesis by inducing VEGF production synergistically with TNF and IL6. Involved in transduction of inflammation downstream of pyroptosis: its mature form is specifically released in the extracellular milieu by passing through the gasdermin-D (GSDMD) pore. This Macaca nemestrina (Pig-tailed macaque) protein is Interleukin-1 beta (IL1B).